Reading from the N-terminus, the 290-residue chain is Acetylglutamate kinase (290 aa).

Substrate contacts are provided by residues 65-66, Arg-87, and Asn-186; that span reads GG.

The protein belongs to the acetylglutamate kinase family. ArgB subfamily.

It localises to the cytoplasm. The enzyme catalyses N-acetyl-L-glutamate + ATP = N-acetyl-L-glutamyl 5-phosphate + ADP. It participates in amino-acid biosynthesis; L-arginine biosynthesis; N(2)-acetyl-L-ornithine from L-glutamate: step 2/4. Functionally, catalyzes the ATP-dependent phosphorylation of N-acetyl-L-glutamate. This is Acetylglutamate kinase from Mycobacterium sp. (strain JLS).